The chain runs to 120 residues: NAD(P)H-quinone oxidoreductase subunit 3, chloroplastic (120 aa).

Transmembrane regions (helical) follow at residues I9–G29, M64–M84, and I88–L108.

It belongs to the complex I subunit 3 family. NDH is composed of at least 16 different subunits, 5 of which are encoded in the nucleus.

It is found in the plastid. Its subcellular location is the chloroplast thylakoid membrane. The enzyme catalyses a plastoquinone + NADH + (n+1) H(+)(in) = a plastoquinol + NAD(+) + n H(+)(out). It carries out the reaction a plastoquinone + NADPH + (n+1) H(+)(in) = a plastoquinol + NADP(+) + n H(+)(out). NDH shuttles electrons from NAD(P)H:plastoquinone, via FMN and iron-sulfur (Fe-S) centers, to quinones in the photosynthetic chain and possibly in a chloroplast respiratory chain. The immediate electron acceptor for the enzyme in this species is believed to be plastoquinone. Couples the redox reaction to proton translocation, and thus conserves the redox energy in a proton gradient. The protein is NAD(P)H-quinone oxidoreductase subunit 3, chloroplastic of Spinacia oleracea (Spinach).